A 122-amino-acid polypeptide reads, in one-letter code: Large ribosomal subunit protein uL14c (122 aa).

Belongs to the universal ribosomal protein uL14 family. Part of the 50S ribosomal subunit.

Its subcellular location is the plastid. The protein resides in the chloroplast. In terms of biological role, binds to 23S rRNA. The protein is Large ribosomal subunit protein uL14c of Manihot esculenta (Cassava).